The primary structure comprises 362 residues: Methylthioribose-1-phosphate isomerase (362 aa).

The active-site Proton donor is Asp-252.

The protein belongs to the eIF-2B alpha/beta/delta subunits family. MtnA subfamily.

The protein resides in the cytoplasm. Its subcellular location is the nucleus. The enzyme catalyses 5-(methylsulfanyl)-alpha-D-ribose 1-phosphate = 5-(methylsulfanyl)-D-ribulose 1-phosphate. It functions in the pathway amino-acid biosynthesis; L-methionine biosynthesis via salvage pathway; L-methionine from S-methyl-5-thio-alpha-D-ribose 1-phosphate: step 1/6. Catalyzes the interconversion of methylthioribose-1-phosphate (MTR-1-P) into methylthioribulose-1-phosphate (MTRu-1-P). The polypeptide is Methylthioribose-1-phosphate isomerase (Drosophila pseudoobscura pseudoobscura (Fruit fly)).